Here is a 62-residue protein sequence, read N- to C-terminus: Photosystem II reaction center protein Z (62 aa).

A run of 2 helical transmembrane segments spans residues 8-28 (ALIG…VAYA) and 41-61 (WVGS…NFFV).

It belongs to the PsbZ family. In terms of assembly, PSII is composed of 1 copy each of membrane proteins PsbA, PsbB, PsbC, PsbD, PsbE, PsbF, PsbH, PsbI, PsbJ, PsbK, PsbL, PsbM, PsbT, PsbX, PsbY, PsbZ, Psb30/Ycf12, peripheral proteins PsbO, CyanoQ (PsbQ), PsbU, PsbV and a large number of cofactors. It forms dimeric complexes.

The protein resides in the cellular thylakoid membrane. Functionally, may control the interaction of photosystem II (PSII) cores with the light-harvesting antenna, regulates electron flow through the 2 photosystem reaction centers. PSII is a light-driven water plastoquinone oxidoreductase, using light energy to abstract electrons from H(2)O, generating a proton gradient subsequently used for ATP formation. The sequence is that of Photosystem II reaction center protein Z from Nostoc punctiforme (strain ATCC 29133 / PCC 73102).